The primary structure comprises 65 residues: Protein translocase subunit SecE (65 aa).

The helical transmembrane segment at Leu-44–Ile-64 threads the bilayer.

This sequence belongs to the SecE/SEC61-gamma family. In terms of assembly, component of the Sec protein translocase complex. Heterotrimer consisting of SecY (alpha), SecG (beta) and SecE (gamma) subunits. The heterotrimers can form oligomers, although 1 heterotrimer is thought to be able to translocate proteins. Interacts with the ribosome. May interact with SecDF, and other proteins may be involved.

It is found in the cell membrane. In terms of biological role, essential subunit of the Sec protein translocation channel SecYEG. Clamps together the 2 halves of SecY. May contact the channel plug during translocation. In Sulfolobus acidocaldarius (strain ATCC 33909 / DSM 639 / JCM 8929 / NBRC 15157 / NCIMB 11770), this protein is Protein translocase subunit SecE.